The sequence spans 652 residues: Inactive leucine-rich repeat receptor-like serine/threonine-protein kinase At1g60630 (652 aa).

Residues 1 to 23 (MISSSSCMFFLVFAFFLISPVRS) form the signal peptide. The Extracellular portion of the chain corresponds to 24–256 (SDVEALLSLK…SRTKLIGIIS (233 aa)). LRR repeat units follow at residues 64 to 84 (SKLV…SLNQ), 85 to 108 (LDQL…LSGL), 109 to 132 (VNLK…LTSL), 134 to 156 (RLKT…LLRL), 158 to 178 (RLYT…PLNQ), and 179 to 203 (ATLR…ALNR). N-linked (GlcNAc...) asparagine glycosylation is found at Asn72, Asn104, and Asn120. 3 N-linked (GlcNAc...) asparagine glycosylation sites follow: Asn185, Asn205, and Asn225. The helical transmembrane segment at 257 to 277 (GSICGGILILLLTFLLICLLW) threads the bilayer. The Cytoplasmic portion of the chain corresponds to 278 to 652 (RRKRSKSKRE…SLPREDHMSI (375 aa)). The disordered stretch occupies residues 286-321 (REERRSKRVAESKEAKTAETEEGTSDQKNKRFSWEK). Positions 350–624 (KASAETLGRG…VKDARAEAAL (275 aa)) constitute a Protein kinase domain. Ser352 carries the phosphoserine modification. ATP-binding positions include 356–364 (LGRGTLGST) and Lys378. Ser430 and Ser433 each carry phosphoserine. At Thr509 the chain carries Phosphothreonine. The segment at 630–652 (SDHSPGRWSDTIQSLPREDHMSI) is disordered.

Belongs to the protein kinase superfamily. Ser/Thr protein kinase family.

It is found in the cell membrane. This Arabidopsis thaliana (Mouse-ear cress) protein is Inactive leucine-rich repeat receptor-like serine/threonine-protein kinase At1g60630.